The primary structure comprises 517 residues: Cytochrome P450 monooxygenase cdmJ (517 aa).

A helical transmembrane segment spans residues 15–35 (YMWSLTLFALCLSAILMFPFL). Residue Asn-404 is glycosylated (N-linked (GlcNAc...) asparagine). Cys-451 is a binding site for heme.

The protein belongs to the cytochrome P450 family. It depends on heme as a cofactor.

The protein resides in the membrane. It catalyses the reaction 3-hydroxypentacecilide A + NADPH + O2 + H(+) = chrodrimanin F + NADP(+) + H2O. The enzyme catalyses chrodrimanin C + NADPH + O2 + H(+) = chrodrimanin H + NADP(+) + H2O. The catalysed reaction is verruculide A + NADPH + O2 + H(+) = chrodrimanin E + NADP(+) + H2O. It carries out the reaction chrodrimanin T + NADPH + O2 + H(+) = chrodrimanin A + NADP(+) + H2O. It functions in the pathway secondary metabolite biosynthesis; terpenoid biosynthesis. Cytochrome P450 monooxygenase; part of the gene cluster that mediates the biosynthesis of chrodrimanin B, a meroterpenoid that acts as a potent blocker of insect GABA-gated chloride channels. The first step of the pathway is the biosynthesis of 6-hydroxymellein by the polyketide synthase cdmE. The prenyltransferase cdmH acts as a 6-hydroxymellein 5-farnesyltransferase and produces the hydrophobic metabolite verruculide C. The FAD-dependent monooxygenase cdmI further converts verruculide C into verruculide B. The terpene cyclase cdmG then produced the pentacyclic molecule 3-hydroxypentacecilide A, the backbone structure of chrodrimanin B, via folding the farnesyl moiety of the substrate into the chair-boat conformation. The short-chain dehydrogenase/reductase cdmF functions as the 3-OH dehydrogenase that oxidizes the C-3 hydroxyl group of 3-hydroxypentacecilide A and produces chrodrimanin C, the dehydrogenated product of 3-hydroxypentacecilide A. The cytochrome P450 monooxygenase cdmJ then accepts both 3-hydroxypentacecilide A and chrodrimanin C and functions as a C-7-beta-hydroxylase to produce respectively chrodrimanin H and chrodrimanin F. The dioxygenase cdmA accepts chrodrimanin H to afford chrodrimanin E, which is further transformed to chrodrimanin A by the dioxygenase cdmD. CdmA can also accept chrodrimanin C as substrate to convert it into verruculide A, which is further converted into chrodrimanin T by cdmD. The last step of the biosynthesis is proposed to be performed by the acetyltransferase cdmC which acetylates chrodrimanin A to yield chrodrimanin B. The pathway may also lead to the production of additional shunt products, including chrodrimanins T and U. This Talaromyces verruculosus (Penicillium verruculosum) protein is Cytochrome P450 monooxygenase cdmJ.